A 154-amino-acid chain; its full sequence is Large ribosomal subunit protein uL15 (154 aa).

The disordered stretch occupies residues 1–61 (MDLSTLKPVA…GGQMPLMRRM (61 aa)).

This sequence belongs to the universal ribosomal protein uL15 family. As to quaternary structure, part of the 50S ribosomal subunit.

Binds to the 23S rRNA. The polypeptide is Large ribosomal subunit protein uL15 (Oenococcus oeni (strain ATCC BAA-331 / PSU-1)).